The sequence spans 215 residues: Transmembrane protein 267 (215 aa).

A run of 3 helical transmembrane segments spans residues 77–97 (FCEV…HFFL), 114–134 (PLHC…LMQL), and 178–198 (YWLY…IMCL).

Its subcellular location is the membrane. This is Transmembrane protein 267 (tmem267) from Xenopus laevis (African clawed frog).